Reading from the N-terminus, the 126-residue chain is Large ribosomal subunit protein bL12 (126 aa).

It belongs to the bacterial ribosomal protein bL12 family. As to quaternary structure, homodimer. Part of the ribosomal stalk of the 50S ribosomal subunit. Forms a multimeric L10(L12)X complex, where L10 forms an elongated spine to which 2 to 4 L12 dimers bind in a sequential fashion. Binds GTP-bound translation factors.

Functionally, forms part of the ribosomal stalk which helps the ribosome interact with GTP-bound translation factors. Is thus essential for accurate translation. This chain is Large ribosomal subunit protein bL12, found in Methylobacterium sp. (strain 4-46).